The sequence spans 449 residues: Tubulin alpha-8 chain (449 aa).

The MREC motif signature appears at 1–4; the sequence is MREC. Gln11, Glu71, Ser140, Gly144, Thr145, Thr179, Asn206, and Asn228 together coordinate GTP. Glu71 lines the Mg(2+) pocket. Glu254 is an active-site residue.

This sequence belongs to the tubulin family. As to quaternary structure, dimer of alpha and beta chains. A typical microtubule is a hollow water-filled tube with an outer diameter of 25 nm and an inner diameter of 15 nM. Alpha-beta heterodimers associate head-to-tail to form protofilaments running lengthwise along the microtubule wall with the beta-tubulin subunit facing the microtubule plus end conferring a structural polarity. Microtubules usually have 13 protofilaments but different protofilament numbers can be found in some organisms and specialized cells. Mg(2+) is required as a cofactor. In terms of processing, some glutamate residues at the C-terminus are polyglycylated, resulting in polyglycine chains on the gamma-carboxyl group. Glycylation is mainly limited to tubulin incorporated into axonemes (cilia and flagella) whereas glutamylation is prevalent in neuronal cells, centrioles, axonemes, and the mitotic spindle. Both modifications can coexist on the same protein on adjacent residues, and lowering polyglycylation levels increases polyglutamylation, and reciprocally. Cilia and flagella glycylation is required for their stability and maintenance. Flagella glycylation controls sperm motility. Some glutamate residues at the C-terminus are polyglutamylated, resulting in polyglutamate chains on the gamma-carboxyl group. Polyglutamylation plays a key role in microtubule severing by spastin (SPAST). SPAST preferentially recognizes and acts on microtubules decorated with short polyglutamate tails: severing activity by SPAST increases as the number of glutamates per tubulin rises from one to eight, but decreases beyond this glutamylation threshold. Glutamylation is also involved in cilia motility. Post-translationally, the C-terminal phenylalanine residue is cleaved by MATCAP1/KIAA0895L.

It is found in the cytoplasm. The protein localises to the cytoskeleton. It carries out the reaction GTP + H2O = GDP + phosphate + H(+). In terms of biological role, tubulin is the major constituent of microtubules, a cylinder consisting of laterally associated linear protofilaments composed of alpha- and beta-tubulin heterodimers. Microtubules grow by the addition of GTP-tubulin dimers to the microtubule end, where a stabilizing cap forms. Below the cap, tubulin dimers are in GDP-bound state, owing to GTPase activity of alpha-tubulin. The polypeptide is Tubulin alpha-8 chain (TUBA8) (Bos taurus (Bovine)).